The chain runs to 311 residues: Putative dihydroorotate dehydrogenase A (fumarate) (311 aa).

Substrate is bound by residues K45, 69–73, and N128; that span reads NSMGL. 45-46 is a binding site for FMN; it reads KT. N128 is a binding site for FMN. C131 serves as the catalytic Nucleophile. Residues K165 and V193 each coordinate FMN. Substrate is bound at residue 194-195; sequence NS. Residues G220, 248–249, and 270–271 contribute to the FMN site; these read GG and GT.

Belongs to the dihydroorotate dehydrogenase family. Type 1 subfamily. In terms of assembly, homodimer. FMN serves as cofactor.

The protein resides in the cytoplasm. The enzyme catalyses (S)-dihydroorotate + fumarate = orotate + succinate. The protein operates within pyrimidine metabolism; UMP biosynthesis via de novo pathway. Its function is as follows. Catalyzes the conversion of dihydroorotate to orotate with fumarate as the electron acceptor. The protein is Putative dihydroorotate dehydrogenase A (fumarate) (pyrD) of Streptococcus pyogenes serotype M3 (strain SSI-1).